We begin with the raw amino-acid sequence, 308 residues long: Porphobilinogen deaminase (308 aa).

S-(dipyrrolylmethanemethyl)cysteine is present on Cys240.

Belongs to the HMBS family. In terms of assembly, monomer. Requires dipyrromethane as cofactor.

It carries out the reaction 4 porphobilinogen + H2O = hydroxymethylbilane + 4 NH4(+). It functions in the pathway porphyrin-containing compound metabolism; protoporphyrin-IX biosynthesis; coproporphyrinogen-III from 5-aminolevulinate: step 2/4. In terms of biological role, tetrapolymerization of the monopyrrole PBG into the hydroxymethylbilane pre-uroporphyrinogen in several discrete steps. In Maridesulfovibrio salexigens (strain ATCC 14822 / DSM 2638 / NCIMB 8403 / VKM B-1763) (Desulfovibrio salexigens), this protein is Porphobilinogen deaminase.